The chain runs to 232 residues: 7-cyano-7-deazaguanine synthase (232 aa).

Residue 13-23 (LSGGLDSATVL) coordinates ATP. Positions 194, 204, 207, and 210 each coordinate Zn(2+).

This sequence belongs to the QueC family. Zn(2+) is required as a cofactor.

The catalysed reaction is 7-carboxy-7-deazaguanine + NH4(+) + ATP = 7-cyano-7-deazaguanine + ADP + phosphate + H2O + H(+). The protein operates within purine metabolism; 7-cyano-7-deazaguanine biosynthesis. In terms of biological role, catalyzes the ATP-dependent conversion of 7-carboxy-7-deazaguanine (CDG) to 7-cyano-7-deazaguanine (preQ(0)). The polypeptide is 7-cyano-7-deazaguanine synthase (Hydrogenovibrio crunogenus (strain DSM 25203 / XCL-2) (Thiomicrospira crunogena)).